The following is a 257-amino-acid chain: Uxu operon transcriptional regulator (257 aa).

An HTH gntR-type domain is found at 8–76 (QRPYQEVGAM…RGAGIYVLDN (69 aa)). The H-T-H motif DNA-binding region spans 36-55 (EREIAEMLDVTRTVVREALI).

Its function is as follows. Repressor for the uxuRBA operon. In Escherichia coli (strain K12), this protein is Uxu operon transcriptional regulator (uxuR).